Consider the following 471-residue polypeptide: COP9 signalosome complex subunit 1 (471 aa).

Residues 249 to 411 form the PCI domain; sequence CFLLASFDHC…KILYARDVDQ (163 aa). A disordered region spans residues 445 to 471; sequence HVKSPPREGSQGELTPANSQSRMSTNM. Phosphoserine is present on residues S448 and S454. The span at 456 to 471 shows a compositional bias: polar residues; it reads GELTPANSQSRMSTNM. Residue T459 is modified to Phosphothreonine. The residue at position 463 (S463) is a Phosphoserine.

This sequence belongs to the CSN1 family. Component of the CSN complex, composed of COPS1/GPS1, COPS2, COPS3, COPS4, COPS5, COPS6, COPS7 (COPS7A or COPS7B), COPS8 and COPS9. In the complex, it probably interacts directly with COPS2, COPS3, COPS4 and COPS5. Interacts directly with inositol kinase ITPK1. Interacts with CAPN8. Interacts with USP48. Interacts with ASB4; this interaction negatively regulates GPS1. In terms of tissue distribution, expressed in the base region of the oxyntic and pyloric mucosae.

Its subcellular location is the cytoplasm. The protein resides in the nucleus. Essential component of the COP9 signalosome complex (CSN), a complex involved in various cellular and developmental processes. The CSN complex is an essential regulator of the ubiquitin (Ubl) conjugation pathway by mediating the deneddylation of the cullin subunits of SCF-type E3 ligase complexes, leading to decrease the Ubl ligase activity of SCF-type complexes such as SCF, CSA or DDB2. The complex is also involved in phosphorylation of p53/TP53, c-jun/JUN, IkappaBalpha/NFKBIA, ITPK1 and IRF8/ICSBP, possibly via its association with CK2 and PKD kinases. CSN-dependent phosphorylation of TP53 and JUN promotes and protects degradation by the Ubl system, respectively. Suppresses G-protein- and mitogen-activated protein kinase-mediated signal transduction. This chain is COP9 signalosome complex subunit 1 (Gps1), found in Mus musculus (Mouse).